Here is a 1029-residue protein sequence, read N- to C-terminus: Eukaryotic translation initiation factor 3 subunit A (1029 aa).

Residues 92-121 are a coiled coil; sequence LKKFIELAEQKVTEAQAKADEIQSSLESAA. Residues 339–523 form the PCI domain; it reads MTKAASFVLL…GVLTFESDIF (185 aa). A coiled-coil region spans residues 606–903; the sequence is TRRAIIEKRK…EEEAEQRRAA (298 aa). Composition is skewed to basic and acidic residues over residues 621-632, 644-666, 797-901, and 913-924; these read ALQKKQREEENR, EQQRLLDEHRERERKRMKDEQDR, TEKR…EQRR, and GPAREASPERTA. Disordered regions lie at residues 621-666 and 797-1029; these read ALQK…EQDR and TEKR…KQQQ. A compositionally biased stretch (low complexity) spans 943–960; sequence AKAAASAGEQPAAAQEAT. Positions 977-993 are enriched in basic and acidic residues; the sequence is ATRDGPSDSRDLSHARE.

The protein belongs to the eIF-3 subunit A family. In terms of assembly, component of the eukaryotic translation initiation factor 3 (eIF-3) complex.

It is found in the cytoplasm. Its function is as follows. RNA-binding component of the eukaryotic translation initiation factor 3 (eIF-3) complex, which is involved in protein synthesis of a specialized repertoire of mRNAs and, together with other initiation factors, stimulates binding of mRNA and methionyl-tRNAi to the 40S ribosome. The eIF-3 complex specifically targets and initiates translation of a subset of mRNAs involved in cell proliferation. The chain is Eukaryotic translation initiation factor 3 subunit A from Coccidioides immitis (strain RS) (Valley fever fungus).